The chain runs to 712 residues: Golgin candidate 3 (712 aa).

The segment at 23–49 (DEEEDDLHKYGSANGVSNSDRRNSSGF) is disordered. Over residues 36–49 (NGVSNSDRRNSSGF) the composition is skewed to polar residues. The stretch at 65-134 (AHHEIERYKA…LKEARTDISR (70 aa)) forms a coiled coil. Over residues 135 to 150 (GSNNYAIKGNNDQSPN) the composition is skewed to polar residues. 2 disordered regions span residues 135–176 (GSNN…TDSF) and 306–347 (ESRK…MEQS). 3 coiled-coil regions span residues 197 to 313 (QATE…LTNS), 340 to 558 (GKEE…LNRM), and 659 to 690 (LKDA…QEAA). Positions 328-344 (STLDKEKPESFPGKEEM) are enriched in basic and acidic residues. The region spanning 557–608 (RMSMESDYLVDRRIVIKLLVTYFQKNHNKEVLDLMVRMLGFSEEDKERIGAA) is the GRIP domain. The disordered stretch occupies residues 666–712 (ERREAEEAAASKAKQDSERTRQEAALHDSEFSTVPLRSSESNQRLSR). The segment covering 678–695 (AKQDSERTRQEAALHDSE) has biased composition (basic and acidic residues). The span at 696 to 712 (FSTVPLRSSESNQRLSR) shows a compositional bias: polar residues.

Interacts with ARF1; preferentially with the active form of the protein.

It localises to the golgi apparatus. The protein localises to the endosome. Golgi matrix protein playing a role in tethering of vesicles to Golgi membranes and in maintaining the overall structure of the Golgi apparatus. The sequence is that of Golgin candidate 3 (GC3) from Arabidopsis thaliana (Mouse-ear cress).